Reading from the N-terminus, the 198-residue chain is Elongation factor Ts (198 aa).

The tract at residues 82–85 is involved in Mg(2+) ion dislocation from EF-Tu; that stretch reads SDFV.

Belongs to the EF-Ts family.

The protein localises to the cytoplasm. Associates with the EF-Tu.GDP complex and induces the exchange of GDP to GTP. It remains bound to the aminoacyl-tRNA.EF-Tu.GTP complex up to the GTP hydrolysis stage on the ribosome. The protein is Elongation factor Ts of Desulfosudis oleivorans (strain DSM 6200 / JCM 39069 / Hxd3) (Desulfococcus oleovorans).